The primary structure comprises 892 residues: Dystroglycan 1 (892 aa).

The first 27 residues, Met1–Ala27, serve as a signal peptide directing secretion. The Extracellular portion of the chain corresponds to Gln28–Thr750. A required for laminin recognition region spans residues His30–Pro405. Residues Ser46–Ile68 form an O-glycosylated at one site region. N-linked (GlcNAc...) asparagine glycosylation occurs at Asn138. Cys179 and Cys261 are disulfide-bonded. The tract at residues Ala313–Ser482 is mucin-like domain. Thr314, Thr316, and Thr376 each carry an O-linked (Man6P...) threonine glycan. The interval Thr378–Lys497 is disordered. Residues Pro410–Arg444 show a composition bias toward low complexity. The interval Thr460–Ser482 is O-glycosylated at seven sites with GalNAc. Residues Arg600–Ser709 form the Peptidase S72 domain. Residues Asn638, Asn646, and Asn658 are each glycosylated (N-linked (GlcNAc...) asparagine). Residues Cys666 and Cys710 are joined by a disulfide bond. The segment at Pro721–Ser742 is disordered. Basic and acidic residues predominate over residues Val733–Ser742. The helical transmembrane segment at Val751–Cys771 threads the bilayer. Over Tyr772–Pro892 the chain is Cytoplasmic. The Nuclear localization signal signature appears at Arg773–Lys779. Thr787 bears the Phosphothreonine mark. Residues Leu816–Pro892 form a required for interaction with CAV3 region. The interval Lys820–Pro892 is disordered. Residues Pro829–Thr843 are compositionally biased toward polar residues. Positions Asn856 to Thr867 are enriched in pro residues. The required for binding DMD and UTRN stretch occupies residues Pro877–Pro892. The PPXY motif motif lies at Pro886–Tyr889. Tyr889 is subject to Phosphotyrosine; by SRC.

In terms of assembly, monomer. Heterodimer of alpha- and beta-dystroglycan subunits which are the central components of the dystrophin-glycoprotein complex. This complex then can form a dystrophin-associated glycoprotein complex (DGC) which is composed of three subcomplexes: a cytoplasmic complex comprised of DMD (or UTRN), DTNA and a number of syntrophins, such as SNTB1, SNTB2, SNTG1 and SNTG2, the transmembrane dystroglycan complex, and the sarcoglycan-sarcospan complex. Interacts (via the N-terminal of alphaDAG1) with LARGE1; the interaction enhances laminin binding. Interacts with SGCD. Interacts with AGR2 and AGR3. Interacts (betaDAG1) with DMD; the interaction is inhibited by phosphorylation on the PPXY motif. Interacts (betaDAG1, via its PPXY motif) with UTRN (via its WWW and ZZ domains); the interaction is inhibited by phosphorylation on the PPXY motif. Interacts (betaDAG1, via its phosphorylated PPXY motif) with the SH2 domain-containing proteins, FYN, CSK, NCK and SHC. Interacts (betaDAG1) with CAV3 (via a central WW-like domain); the interaction disrupts the binding of DMD. BetaDAG1 directly interacts with ANK3, but not with ANK2; this interaction does not interfere with DMD-binding and is required for retention at costameres. Identified in a dystroglycan complex that contains at least PRX, DRP2, UTRN, DMD and DAG1. Interacts with POMGNT1. BetaDAG1 interacts with CD93. In terms of processing, O-glycosylated. POMGNT1 catalyzes the initial addition of N-acetylglucosamine, giving rise to the GlcNAc(beta1-2)Man(alpha1-)O-Ser/Thr moiety and thus providing the necessary basis for the addition of further carbohydrate moieties. Heavily O-glycosylated comprising of up to two thirds of its mass and the carbohydrate composition differs depending on tissue type. Mucin-type O-glycosylation is important for ligand binding activity. O-mannosylation is found in high abundance in both brain and muscle where the most abundant glycan is Sia-alpha-2-3-Gal-beta-1-4-Glc-NAc-beta-1-2-Man. In muscle, glycosylation on Thr-314, Thr-316 and Thr-376 by a phosphorylated O-mannosyl glycan with the structure 2-(N-acetylamido)-2-deoxygalactosyl-beta-1,3-2-(N-acetylamido)-2-deoxyglucosyl-beta-1,4-6-phosphomannose is mediated by like-acetylglucosaminyltransferase (LARGE1) protein amd is required for laminin binding. O-glycosylated in the N-terminal region with a core 1 or possibly core 8 glycan. The brain form displays a unique glycosylation pattern which is absent in other tissues; this form shows enhanced binding to laminin LAMA5 compared to the skeletal muscle form. N-glycosylated. Post-translationally, autolytic cleavage produces the alpha and beta subunits. In cutaneous cells, as well as in certain pathological conditions, shedding of beta-dystroglycan can occur releasing a peptide of about 30 kDa. In terms of processing, SRC-mediated phosphorylation of the PPXY motif of the beta subunit recruits SH2 domain-containing proteins, but inhibits binding to WWW domain-containing proteins, DMD and UTRN. This phosphorylation also inhibits nuclear entry.

The protein localises to the secreted. Its subcellular location is the extracellular space. The protein resides in the cell membrane. It localises to the cytoplasm. It is found in the cytoskeleton. The protein localises to the nucleus. Its subcellular location is the nucleoplasm. The protein resides in the sarcolemma. It localises to the postsynaptic cell membrane. The dystroglycan complex is involved in a number of processes including laminin and basement membrane assembly, sarcolemmal stability, cell survival, peripheral nerve myelination, nodal structure, cell migration, and epithelial polarization. In terms of biological role, extracellular peripheral glycoprotein that acts as a receptor for extracellular matrix proteins containing laminin-G domains. Receptor for laminin-2 (LAMA2) and agrin in peripheral nerve Schwann cells. Also acts as a receptor for laminin LAMA5. Functionally, transmembrane protein that plays important roles in connecting the extracellular matrix to the cytoskeleton. Acts as a cell adhesion receptor in both muscle and non-muscle tissues. Receptor for both DMD and UTRN and, through these interactions, scaffolds axin to the cytoskeleton. Also functions in cell adhesion-mediated signaling and implicated in cell polarity. This Canis lupus familiaris (Dog) protein is Dystroglycan 1.